The chain runs to 298 residues: UDP-N-acetylenolpyruvoylglucosamine reductase (298 aa).

Residues 26-191 form the FAD-binding PCMH-type domain; sequence KTGGEAEYLA…LSATFSLKPG (166 aa). Arginine 170 is an active-site residue. The Proton donor role is filled by serine 220. Glutamate 290 is a catalytic residue.

It belongs to the MurB family. FAD serves as cofactor.

It is found in the cytoplasm. It catalyses the reaction UDP-N-acetyl-alpha-D-muramate + NADP(+) = UDP-N-acetyl-3-O-(1-carboxyvinyl)-alpha-D-glucosamine + NADPH + H(+). It participates in cell wall biogenesis; peptidoglycan biosynthesis. Its function is as follows. Cell wall formation. The polypeptide is UDP-N-acetylenolpyruvoylglucosamine reductase (Lactobacillus acidophilus (strain ATCC 700396 / NCK56 / N2 / NCFM)).